The following is a 613-amino-acid chain: MVRMTKNVLVSVAWPYANGPRHIGHVAGFGVPSDVFARFQRMRGNNVLMVSGTDEHGTPLLVQADKEGVSVQELADKYNRQIVEDLTGLGLSYDLFTRTTTSNHYAVVQELFRGLHDNGYMIKETTLGAISPSTGRTLPDRYIEGTCPICHADGARGDQCDNCGNQLDPADLINPVSKINGETPEFVETEHFLLDLPALADSLTAWLKGREDWRPNVLKFSLNLLEDIRPRAMTRDIDWGIPIPVEGWQDNNAKKLYVWFDAVVGYLSASIEWAWRTGDPEAWRTFWNDPETSSYYFMGKDNITFHSQIWPAELLGYAGRGSRGGEVGDLGELNLPTEVVSSEFLTMSGSKFSSSKGVVIYVKDFLAEFGPDPLRYFIAVAGPENNDTDFTWDEFVRRVNNELANGWGNLVNRTVSMAHKNFGEVPVPSALTDSDQRILDLAASTFDSAGADLELSKFKNAITQIMHVVGEANAYIAEQEPWKLAKDETQRERLATVLWTALQVVSDCNTMLTPYLPHTAQKVHETLGREGIWAASPQIVEVTNESPRQPVGVGLPDPEHTYPVIMGDYQAQAAKWERIDMVPGTPLNKPAPLVTKLDPELGETGPEWAPVQS.

A 'HIGH' region motif is present at residues Pro15 to His25. Zn(2+) is bound by residues Cys147, Cys150, Cys160, and Cys163. The 'KMSKS' region signature appears at Lys351–Ser355. Ser354 contributes to the ATP binding site.

Belongs to the class-I aminoacyl-tRNA synthetase family. MetG type 1 subfamily. In terms of assembly, monomer. It depends on Zn(2+) as a cofactor.

The protein localises to the cytoplasm. The enzyme catalyses tRNA(Met) + L-methionine + ATP = L-methionyl-tRNA(Met) + AMP + diphosphate. In terms of biological role, is required not only for elongation of protein synthesis but also for the initiation of all mRNA translation through initiator tRNA(fMet) aminoacylation. The chain is Methionine--tRNA ligase from Corynebacterium efficiens (strain DSM 44549 / YS-314 / AJ 12310 / JCM 11189 / NBRC 100395).